A 272-amino-acid chain; its full sequence is Phosphoribosylformylglycinamidine synthase subunit PurQ (272 aa).

Positions 8 to 243 (VLVMSGYGIN…SEPEYQLKKE (236 aa)) constitute a Glutamine amidotransferase type-1 domain. Residue Cys98 is the Nucleophile of the active site. Residues His225, Glu227, and Glu235 contribute to the active site.

Part of the FGAM synthase complex composed of 1 PurL, 1 PurQ and 2 PurS subunits.

It localises to the cytoplasm. It catalyses the reaction N(2)-formyl-N(1)-(5-phospho-beta-D-ribosyl)glycinamide + L-glutamine + ATP + H2O = 2-formamido-N(1)-(5-O-phospho-beta-D-ribosyl)acetamidine + L-glutamate + ADP + phosphate + H(+). The catalysed reaction is L-glutamine + H2O = L-glutamate + NH4(+). It functions in the pathway purine metabolism; IMP biosynthesis via de novo pathway; 5-amino-1-(5-phospho-D-ribosyl)imidazole from N(2)-formyl-N(1)-(5-phospho-D-ribosyl)glycinamide: step 1/2. In terms of biological role, part of the phosphoribosylformylglycinamidine synthase complex involved in the purines biosynthetic pathway. Catalyzes the ATP-dependent conversion of formylglycinamide ribonucleotide (FGAR) and glutamine to yield formylglycinamidine ribonucleotide (FGAM) and glutamate. The FGAM synthase complex is composed of three subunits. PurQ produces an ammonia molecule by converting glutamine to glutamate. PurL transfers the ammonia molecule to FGAR to form FGAM in an ATP-dependent manner. PurS interacts with PurQ and PurL and is thought to assist in the transfer of the ammonia molecule from PurQ to PurL. This chain is Phosphoribosylformylglycinamidine synthase subunit PurQ, found in Methanococcus maripaludis (strain C7 / ATCC BAA-1331).